The chain runs to 252 residues: 2-succinyl-6-hydroxy-2,4-cyclohexadiene-1-carboxylate synthase (252 aa).

This sequence belongs to the AB hydrolase superfamily. MenH family. As to quaternary structure, monomer.

It carries out the reaction 5-enolpyruvoyl-6-hydroxy-2-succinyl-cyclohex-3-ene-1-carboxylate = (1R,6R)-6-hydroxy-2-succinyl-cyclohexa-2,4-diene-1-carboxylate + pyruvate. It functions in the pathway quinol/quinone metabolism; 1,4-dihydroxy-2-naphthoate biosynthesis; 1,4-dihydroxy-2-naphthoate from chorismate: step 3/7. Its pathway is quinol/quinone metabolism; menaquinone biosynthesis. Its function is as follows. Catalyzes a proton abstraction reaction that results in 2,5-elimination of pyruvate from 2-succinyl-5-enolpyruvyl-6-hydroxy-3-cyclohexene-1-carboxylate (SEPHCHC) and the formation of 2-succinyl-6-hydroxy-2,4-cyclohexadiene-1-carboxylate (SHCHC). The chain is 2-succinyl-6-hydroxy-2,4-cyclohexadiene-1-carboxylate synthase from Shigella dysenteriae serotype 1 (strain Sd197).